Consider the following 133-residue polypeptide: Small ribosomal subunit protein uS8 (133 aa).

This sequence belongs to the universal ribosomal protein uS8 family. As to quaternary structure, part of the 30S ribosomal subunit. Contacts proteins S5 and S12.

One of the primary rRNA binding proteins, it binds directly to 16S rRNA central domain where it helps coordinate assembly of the platform of the 30S subunit. This is Small ribosomal subunit protein uS8 from Parasynechococcus marenigrum (strain WH8102).